A 288-amino-acid chain; its full sequence is uncharacterized protein (288 aa).

To M.bovis Mb1522c, M.leprae ML1804 and M.avium MAV321.

This is an uncharacterized protein from Mycobacterium tuberculosis (strain CDC 1551 / Oshkosh).